Consider the following 89-residue polypeptide: Small ribosomal subunit protein uS15 (89 aa).

Belongs to the universal ribosomal protein uS15 family. In terms of assembly, part of the 30S ribosomal subunit. Forms a bridge to the 50S subunit in the 70S ribosome, contacting the 23S rRNA.

One of the primary rRNA binding proteins, it binds directly to 16S rRNA where it helps nucleate assembly of the platform of the 30S subunit by binding and bridging several RNA helices of the 16S rRNA. Functionally, forms an intersubunit bridge (bridge B4) with the 23S rRNA of the 50S subunit in the ribosome. This Syntrophobacter fumaroxidans (strain DSM 10017 / MPOB) protein is Small ribosomal subunit protein uS15.